A 379-amino-acid polypeptide reads, in one-letter code: MSRSALRRVKRLVVKVGTGTLTDRAGRFDRDNCARLASELAEVSRGRKVVLVSSGAVALGAERLGLARSRGKPWDLPTKQACAAAGQPHLMAAWGEALGRHGLVTAQVLLTADDLASRKRFLNARRTFERLLDAGAVPVVNENDTVAVDELKVGDNDTLAALVAGCVEADAVAMLTDVDGLYDRNPAEPGARLLRDVPRVTAEIERSAGGAGSERSVGGMITKVKAARRLGAQGVVTALLSGRRARALPALLAGEPVGTVFAPGAHRLSSRQGWLAAAARGKGVILVDAGARRALVEQGRSLLPSGVRGVQGQFGVGDPVDVAVDPARPFARGLAGYAADEVRRIAGLKTGEIERALGYKYLDEIVHRNDLVVLETGRE.

Lysine 15 provides a ligand contact to ATP. Residues serine 54, aspartate 144, and asparagine 156 each coordinate substrate. 176–177 (TD) provides a ligand contact to ATP. Residues 282–360 (KGVILVDAGA…GEIERALGYK (79 aa)) form the PUA domain.

This sequence belongs to the glutamate 5-kinase family.

The protein resides in the cytoplasm. It carries out the reaction L-glutamate + ATP = L-glutamyl 5-phosphate + ADP. It functions in the pathway amino-acid biosynthesis; L-proline biosynthesis; L-glutamate 5-semialdehyde from L-glutamate: step 1/2. In terms of biological role, catalyzes the transfer of a phosphate group to glutamate to form L-glutamate 5-phosphate. In Anaeromyxobacter dehalogenans (strain 2CP-C), this protein is Glutamate 5-kinase.